A 370-amino-acid chain; its full sequence is Queuine tRNA-ribosyltransferase (370 aa).

The active-site Proton acceptor is the aspartate 92. Residues aspartate 92–phenylalanine 96, aspartate 146, glutamine 190, and glycine 217 each bind substrate. The tract at residues glycine 248–asparagine 254 is RNA binding. Catalysis depends on aspartate 267, which acts as the Nucleophile. Zn(2+)-binding residues include cysteine 305, cysteine 307, cysteine 310, and histidine 336.

The protein belongs to the queuine tRNA-ribosyltransferase family. In terms of assembly, homodimer. Within each dimer, one monomer is responsible for RNA recognition and catalysis, while the other monomer binds to the replacement base PreQ1. Zn(2+) serves as cofactor.

It carries out the reaction 7-aminomethyl-7-carbaguanine + guanosine(34) in tRNA = 7-aminomethyl-7-carbaguanosine(34) in tRNA + guanine. It participates in tRNA modification; tRNA-queuosine biosynthesis. In terms of biological role, catalyzes the base-exchange of a guanine (G) residue with the queuine precursor 7-aminomethyl-7-deazaguanine (PreQ1) at position 34 (anticodon wobble position) in tRNAs with GU(N) anticodons (tRNA-Asp, -Asn, -His and -Tyr). Catalysis occurs through a double-displacement mechanism. The nucleophile active site attacks the C1' of nucleotide 34 to detach the guanine base from the RNA, forming a covalent enzyme-RNA intermediate. The proton acceptor active site deprotonates the incoming PreQ1, allowing a nucleophilic attack on the C1' of the ribose to form the product. After dissociation, two additional enzymatic reactions on the tRNA convert PreQ1 to queuine (Q), resulting in the hypermodified nucleoside queuosine (7-(((4,5-cis-dihydroxy-2-cyclopenten-1-yl)amino)methyl)-7-deazaguanosine). This is Queuine tRNA-ribosyltransferase from Desulforapulum autotrophicum (strain ATCC 43914 / DSM 3382 / VKM B-1955 / HRM2) (Desulfobacterium autotrophicum).